Reading from the N-terminus, the 427-residue chain is UPF0229 protein YeaH (427 aa).

Residues 79-90 (NDHFVQNDRIER) are compositionally biased toward basic and acidic residues. Residues 79 to 110 (NDHFVQNDRIERPQGGGGGSGSGQGQASQDGE) are disordered. Positions 92–102 (QGGGGGSGSGQ) are enriched in gly residues.

It belongs to the UPF0229 family.

In Escherichia coli O139:H28 (strain E24377A / ETEC), this protein is UPF0229 protein YeaH.